Reading from the N-terminus, the 260-residue chain is NAD-capped RNA hydrolase NudC (260 aa).

Substrate-binding residues include Lys-25 and Arg-69. The Zn(2+) site is built by Cys-98 and Cys-101. Residue Glu-111 coordinates substrate. Positions 116 and 119 each coordinate Zn(2+). Tyr-124 is a binding site for substrate. One can recognise a Nudix hydrolase domain in the interval 125 to 248 (PQIAPCVIVA…TVARRLIEDT (124 aa)). A divalent metal cation contacts are provided by Ala-158, Glu-174, and Glu-178. The Nudix box motif lies at 159 to 180 (GFVEVGETLEQAVSREVLEESN). Residue 192 to 199 (QPWPFPHS) coordinates substrate. An a divalent metal cation-binding site is contributed by Glu-219. Ala-241 contacts substrate.

It belongs to the Nudix hydrolase family. NudC subfamily. In terms of assembly, homodimer. Requires Mg(2+) as cofactor. It depends on Mn(2+) as a cofactor. Zn(2+) is required as a cofactor.

The catalysed reaction is a 5'-end NAD(+)-phospho-ribonucleoside in mRNA + H2O = a 5'-end phospho-adenosine-phospho-ribonucleoside in mRNA + beta-nicotinamide D-ribonucleotide + 2 H(+). It catalyses the reaction NAD(+) + H2O = beta-nicotinamide D-ribonucleotide + AMP + 2 H(+). The enzyme catalyses NADH + H2O = reduced beta-nicotinamide D-ribonucleotide + AMP + 2 H(+). Its function is as follows. mRNA decapping enzyme that specifically removes the nicotinamide adenine dinucleotide (NAD) cap from a subset of mRNAs by hydrolyzing the diphosphate linkage to produce nicotinamide mononucleotide (NMN) and 5' monophosphate mRNA. The NAD-cap is present at the 5'-end of some mRNAs and stabilizes RNA against 5'-processing. Has preference for mRNAs with a 5'-end purine. Catalyzes the hydrolysis of a broad range of dinucleotide pyrophosphates. The chain is NAD-capped RNA hydrolase NudC from Yersinia pseudotuberculosis serotype O:1b (strain IP 31758).